A 188-amino-acid chain; its full sequence is Segregation and condensation protein B (188 aa).

This sequence belongs to the ScpB family. In terms of assembly, homodimer. Homodimerization may be required to stabilize the binding of ScpA to the Smc head domains. Component of a cohesin-like complex composed of ScpA, ScpB and the Smc homodimer, in which ScpA and ScpB bind to the head domain of Smc. The presence of the three proteins is required for the association of the complex with DNA.

The protein resides in the cytoplasm. Participates in chromosomal partition during cell division. May act via the formation of a condensin-like complex containing Smc and ScpA that pull DNA away from mid-cell into both cell halves. The sequence is that of Segregation and condensation protein B from Lactococcus lactis subsp. cremoris (strain MG1363).